The following is a 447-amino-acid chain: Acyl-lipid (7-3)-desaturase (447 aa).

Residues 36–94 (LTIVGDSVYDAKAFRSEHPGGAHFVSLFGGRDATEAFMEYHRRAWPKSRMSRFHVGSLA) form the Cytochrome b5 heme-binding domain. The heme site is built by His53 and His76. The next 3 membrane-spanning stretches (helical) occupy residues 123-143 (GFAP…AIAL), 154-174 (LLPS…IQHD), and 185-205 (SVNL…ILWL). A Histidine box-1 motif is present at residues 173–177 (HDANH). The Histidine box-2 signature appears at 208 to 213 (HVVMHH). A run of 3 helical transmembrane segments spans residues 244–264 (WLQH…LLFL), 286–306 (LFMP…ALPL), and 315–335 (AVCI…FFFI). The Histidine box-3 signature appears at 386–390 (QIEHH).

The protein belongs to the fatty acid desaturase type 1 family. The cofactor is Fe(2+).

The protein resides in the membrane. It catalyses the reaction a (7Z,10Z,13Z,16Z,19Z)-docosapentaenoyl-containing glycerolipid + 2 Fe(II)-[cytochrome b5] + O2 + 2 H(+) = a (4Z,7Z,10Z,13Z,16Z,19Z)-docosahexaenoyl-containing glycerolipid + 2 Fe(III)-[cytochrome b5] + 2 H2O. The enzyme catalyses a (7Z,10Z,13Z,16Z)-docosatetraenoyl-containing glycerolipid + 2 Fe(II)-[cytochrome b5] + O2 + 2 H(+) = a (4Z,7Z,10Z,13Z,16Z)-docosapentaenoyl-containing glycerolipid + 2 Fe(III)-[cytochrome b5] + 2 H2O. Fatty acid desaturase that introduces a cis double bond at the 4-position in 22-carbon polyunsaturated fatty acids that contain a Delta(7) double bond, resulting in the production of delta-4 desaturated fatty acid docosahexanoic acid (DHA). This Rebecca salina (Marine microalga) protein is Acyl-lipid (7-3)-desaturase.